A 428-amino-acid chain; its full sequence is GTPase Obg (428 aa).

The Obg domain maps to 1–158 (MFIDKAKVFI…LSIVLELKLL (158 aa)). The region spanning 159 to 331 (ADVGLLGFPN…VIKEAARMLK (173 aa)) is the OBG-type G domain. GTP-binding positions include 165-172 (GFPNVGKS), 190-194 (FTTLK), 212-215 (DIPG), 282-285 (NKSD), and 312-314 (SAA). Residues Ser-172 and Thr-192 each contribute to the Mg(2+) site. The region spanning 345 to 428 (MYIPEEKRFT…LNDFEFEYLL (84 aa)) is the OCT domain.

It belongs to the TRAFAC class OBG-HflX-like GTPase superfamily. OBG GTPase family. As to quaternary structure, monomer. Mg(2+) serves as cofactor.

The protein resides in the cytoplasm. An essential GTPase which binds GTP, GDP and possibly (p)ppGpp with moderate affinity, with high nucleotide exchange rates and a fairly low GTP hydrolysis rate. Plays a role in control of the cell cycle, stress response, ribosome biogenesis and in those bacteria that undergo differentiation, in morphogenesis control. This is GTPase Obg from Clostridium botulinum (strain Eklund 17B / Type B).